Reading from the N-terminus, the 813-residue chain is Protein mac-1 (813 aa).

2 coiled-coil regions span residues 58–89 and 122–152; these read VREA…VQEI and SDDS…TVLN. Disordered stretches follow at residues 97–131 and 152–193; these read TRKR…ERAA and NLYT…GAVS. The span at 158–172 shows a compositional bias: polar residues; sequence SAPSTPVSTPKNQAT. A compositionally biased stretch (low complexity) spans 175 to 191; that stretch reads PPGASAAPPALPRGLGA. ATP contacts are provided by residues 246-253 and 575-582; these read GPPGCGKT.

Belongs to the AAA ATPase family. Found in a complex composed of ced-3, ced-4 and mac-1 or of ced-9, ced-4 and mac-1. Within the complex, interacts with ced-4.

In terms of biological role, probably together with ced-9, plays a modest role in preventing ced-4 and caspase ced-3-mediated apoptosis. This is Protein mac-1 from Caenorhabditis elegans.